Reading from the N-terminus, the 933-residue chain is Progesterone receptor (933 aa).

The interval 1–48 is disordered; the sequence is MTELKAKGPRAPHVAGGPPSPEVGSPLLCRPAAGPFEGSQTSDTLPEV. The segment at 1 to 164 is AF3; mediates transcriptional activation; that stretch reads MTELKAKGPR…PATQRVLSPL (164 aa). A modulating, Pro-Rich region spans residues 1-566; sequence MTELKAKGPR…YSFESLPQKI (566 aa). Position 20 is a phosphoserine (S20). The LXXL motif 1 motif lies at 55 to 59; it reads LDGLL. The disordered stretch occupies residues 66-255; it reads GQDLPDEKTQ…GAAAGGGAAA (190 aa). S81 is subject to Phosphoserine. The LXXL motif 2 motif lies at 115 to 119; sequence LDTLL. A phosphoserine mark is found at S130 and S162. Positions 165–305 are mediates transcriptional transrepression; the sequence is MSRSGGKTGD…LATTMMDFIH (141 aa). Positions 183–187 match the Nuclear localization signal motif; the sequence is KVLPR. Phosphoserine occurs at positions 190 and 213. S294 bears the Phosphoserine; by MAPK1 mark. Positions 331-378 are disordered; it reads GGAGAASAFAPPQSSPSASSTPVAVGDFPDCAYPPDAEPKDNAYPLYG. Positions 335-350 are enriched in low complexity; the sequence is AASAFAPPQSSPSASS. Position 345 is a phosphoserine; by MAPK (S345). Residue K388 forms a Glycyl lysine isopeptide (Lys-Gly) (interchain with G-Cter in SUMO); alternate linkage. K388 participates in a covalent cross-link: Glycyl lysine isopeptide (Lys-Gly) (interchain with G-Cter in ubiquitin); alternate. Position 400 is a phosphoserine; by CDK2 (S400). The segment at 415–454 is disordered; that stretch reads PDYPLGPPPQLPPRAPPSRPGEAAVTAAPASASVSSASSP. Positions 418 to 433 are enriched in pro residues; the sequence is PLGPPPQLPPRAPPSR. A compositionally biased stretch (low complexity) spans 437 to 454; sequence AAVTAAPASASVSSASSP. The tract at residues 456 to 546 is AF1; mediates transcriptional activation; that stretch reads STLECILYKA…VYPPYLNYLR (91 aa). K531 participates in a covalent cross-link: Glycyl lysine isopeptide (Lys-Gly) (interchain with G-Cter in SUMO). 2 consecutive NR C4-type zinc fingers follow at residues 567–587 and 603–627; these read CLICGDEASGCHYGVLTCGSC and CAGRNDCIVDKIRRKNCPACRLRKC. A DNA-binding region (nuclear receptor) is located at residues 567–639; it reads CLICGDEASG…AGMVLGGRKF (73 aa). The residue at position 676 (S676) is a Phosphoserine. The region spanning 679-913 is the NR LBD domain; it reads QDIQLIPPLI…EFPEMMSEVI (235 aa). The interval 687–933 is AF2; mediates transcriptional activation; sequence LIKLLMSIEP…MVKPLLFHKK (247 aa).

This sequence belongs to the nuclear hormone receptor family. In terms of assembly, interacts with SMARD1 and UNC45A. Interacts with CUEDC2; the interaction promotes ubiquitination, decreases sumoylation, and represses transcriptional activity. Interacts with PIAS3; the interaction promotes sumoylation of PR in a hormone-dependent manner, inhibits DNA-binding, and alters nuclear export. Interacts with SP1; the interaction requires ligand-induced phosphorylation on Ser-345 by ERK1/2-MAPK. Interacts with PRMT2. Interacts with NCOA2 and NCOA1. Interacts with KLF9. Interacts with GTF2B. Post-translationally, phosphorylated on multiple serine sites. Several of these sites are hormone-dependent. Phosphorylation on Ser-294 is highly hormone-dependent and modulates ubiquitination and sumoylation on Lys-388. Phosphorylation on Ser-345 also requires induction by hormone. Basal phosphorylation on Ser-81, Ser-162, Ser-190 and Ser-400 is increased in response to progesterone and can be phosphorylated in vitro by the CDK2-A1 complex. Increased levels of phosphorylation on Ser-400 also in the presence of EGF, heregulin, IGF, PMA and FBS. Phosphorylation at this site by CDK2 is ligand-independent, and increases nuclear translocation and transcriptional activity. Phosphorylation at Ser-162 and Ser-294, but not at Ser-190, is impaired during the G(2)/M phase of the cell cycle. Phosphorylation on Ser-345 by ERK1/2 MAPK is required for interaction with SP1. In terms of processing, sumoylation is hormone-dependent and represses transcriptional activity. Sumoylation on all three sites is enhanced by PIAS3. Desumoylated by SENP1. Sumoylation on Lys-388, the main site of sumoylation, is repressed by ubiquitination on the same site, and modulated by phosphorylation at Ser-294. Ubiquitination is hormone-dependent and represses sumoylation on the same site. Promoted by MAPK-mediated phosphorylation on Ser-294. Post-translationally, palmitoylated by ZDHHC7 and ZDHHC21. Palmitoylation is required for plasma membrane targeting and for rapid intracellular signaling via ERK and AKT kinases and cAMP generation.

The protein resides in the nucleus. Its subcellular location is the cytoplasm. The steroid hormones and their receptors are involved in the regulation of eukaryotic gene expression and affect cellular proliferation and differentiation in target tissues. Transcriptional activator of several progesteron-dependent promoters in a variety of cell types. Involved in activation of SRC-dependent MAPK signaling on hormone stimulation. The polypeptide is Progesterone receptor (PGR) (Trachypithecus obscurus (Dusky leaf-monkey)).